The chain runs to 284 residues: Bifunctional protein FolD (284 aa).

Residues 165–167 (GRS), serine 190, and isoleucine 231 contribute to the NADP(+) site.

It belongs to the tetrahydrofolate dehydrogenase/cyclohydrolase family. As to quaternary structure, homodimer.

The enzyme catalyses (6R)-5,10-methylene-5,6,7,8-tetrahydrofolate + NADP(+) = (6R)-5,10-methenyltetrahydrofolate + NADPH. It carries out the reaction (6R)-5,10-methenyltetrahydrofolate + H2O = (6R)-10-formyltetrahydrofolate + H(+). It participates in one-carbon metabolism; tetrahydrofolate interconversion. In terms of biological role, catalyzes the oxidation of 5,10-methylenetetrahydrofolate to 5,10-methenyltetrahydrofolate and then the hydrolysis of 5,10-methenyltetrahydrofolate to 10-formyltetrahydrofolate. The chain is Bifunctional protein FolD from Lysinibacillus sphaericus (strain C3-41).